Here is a 392-residue protein sequence, read N- to C-terminus: Speckle-type POZ protein-like A (392 aa).

One can recognise an MATH domain in the interval 31 to 161 (KFSYMWTINN…DDKLTLFCEV (131 aa)). A BTB domain is found at 200–267 (TDCSLYVGGQ…IYTGKAPNLE (68 aa)).

Belongs to the Tdpoz family. As to quaternary structure, homodimer. Heterodimer with SPOP. Component of cullin-RING-based BCR (BTB-CUL3-RBX1) E3 ubiquitin-protein ligase complexes containing homodimeric SPOPL or the heterodimer formed by SPOP and SPOPL.

It localises to the nucleus. Its pathway is protein modification; protein ubiquitination. Component of a cullin-RING-based BCR (BTB-CUL3-RBX1) E3 ubiquitin-protein ligase complex that mediates the ubiquitination and subsequent proteasomal degradation of target proteins, but with relatively low efficiency. This is Speckle-type POZ protein-like A (spopla) from Danio rerio (Zebrafish).